The primary structure comprises 321 residues: Lipoyl synthase (321 aa).

[4Fe-4S] cluster-binding residues include Cys-68, Cys-73, Cys-79, Cys-94, Cys-98, Cys-101, and Ser-308. In terms of domain architecture, Radical SAM core spans 80 to 297 (FNHGTATFMI…KAEAMAMGFT (218 aa)).

This sequence belongs to the radical SAM superfamily. Lipoyl synthase family. [4Fe-4S] cluster serves as cofactor.

The protein localises to the cytoplasm. The enzyme catalyses [[Fe-S] cluster scaffold protein carrying a second [4Fe-4S](2+) cluster] + N(6)-octanoyl-L-lysyl-[protein] + 2 oxidized [2Fe-2S]-[ferredoxin] + 2 S-adenosyl-L-methionine + 4 H(+) = [[Fe-S] cluster scaffold protein] + N(6)-[(R)-dihydrolipoyl]-L-lysyl-[protein] + 4 Fe(3+) + 2 hydrogen sulfide + 2 5'-deoxyadenosine + 2 L-methionine + 2 reduced [2Fe-2S]-[ferredoxin]. It functions in the pathway protein modification; protein lipoylation via endogenous pathway; protein N(6)-(lipoyl)lysine from octanoyl-[acyl-carrier-protein]: step 2/2. In terms of biological role, catalyzes the radical-mediated insertion of two sulfur atoms into the C-6 and C-8 positions of the octanoyl moiety bound to the lipoyl domains of lipoate-dependent enzymes, thereby converting the octanoylated domains into lipoylated derivatives. The protein is Lipoyl synthase of Cronobacter sakazakii (strain ATCC BAA-894) (Enterobacter sakazakii).